The following is a 1104-amino-acid chain: Extended synaptotagmin-1 (1104 aa).

Residue methionine 1 is modified to N-acetylmethionine. Over 1 to 38 (MERSPGEGPSPSPMDQPSAPSDPTDQPPAAHAKPDPGS) the chain is Cytoplasmic. The disordered stretch occupies residues 1–48 (MERSPGEGPSPSPMDQPSAPSDPTDQPPAAHAKPDPGSGGQPAGPGAA). Over residues 37 to 47 (GSGGQPAGPGA) the composition is skewed to gly residues. Residues 39–59 (GGQPAGPGAAGEALAVLTSFG) form a helical membrane-spanning segment. The Lumenal portion of the chain corresponds to 60–62 (RRL). The chain crosses the membrane as a helical span at residues 63 to 83 (LVLIPVYLAGAVGLSVGFVLF). Residues 84–1104 (GLALYLGWRR…LMDNKDKGSS (1021 aa)) lie on the Cytoplasmic side of the membrane. Positions 91 to 116 (WRRVRDEKERSLRAARQLLDDEEQLT) form a coiled coil. The SMP-LTD domain occupies 135 to 313 (DVEKAEWLNK…LPNRLLVPLV (179 aa)). 4 consecutive C2 domains span residues 312–433 (LVPD…DDWF), 460–580 (QVLQ…QLSS), 627–751 (SVDA…DEWL), and 777–899 (LEEV…TLSS). At serine 324 the chain carries Phosphoserine; by CDK5. 8 residues coordinate Ca(2+): lysine 344, aspartate 345, aspartate 357, aspartate 404, aspartate 406, aspartate 408, aspartate 410, and aspartate 411. The disordered stretch occupies residues 617–641 (VDSENPQRGSSVDAPPRPCHTTPDS). Lysine 817 bears the N6-acetyllysine mark. Residues serine 820 and serine 941 each carry the phosphoserine modification. The interval 924 to 950 (SHSYSHSSSSLSEEPELSGGPPHITSS) is disordered. Residues 925 to 946 (HSYSHSSSSLSEEPELSGGPPH) are compositionally biased toward low complexity. The residue at position 948 (threonine 948) is a Phosphothreonine. Phosphoserine occurs at positions 949 and 963. Residues 971–1093 (PLGQVKLTLW…DLSQGVARWY (123 aa)) form the C2 5 domain. A Phosphotyrosine modification is found at tyrosine 1009. The interval 1018–1025 (KNRGTKRR) is required for phosphatidylinositol 4,5-bisphosphate-dependent location at the cell membrane. Residue serine 1034 is modified to Phosphoserine.

The protein belongs to the extended synaptotagmin family. As to quaternary structure, interacts with ESYT2 and ESYT3. Interacts with ADGRD1; inhibiting the G-protein-coupled receptor activity of ADGRD1. Interaction with ADGRD1 is abolished when cytosolic calcium increases, relieving ADGRD1 G-protein-coupled receptor activity. Interacts (phosphorylated form) with SLC2A4. Post-translationally, phosphorylated on Ser residues in insulin-treated adipocytes (in vitro); this promotes interaction with SLC2A4. In terms of tissue distribution, widely expressed.

It is found in the endoplasmic reticulum membrane. The protein localises to the cell membrane. Binds calcium (via the C2 domains) and translocates to sites of contact between the endoplasmic reticulum and the cell membrane in response to increased cytosolic calcium levels. Helps tether the endoplasmic reticulum to the cell membrane and promotes the formation of appositions between the endoplasmic reticulum and the cell membrane. Acts as an inhibitor of ADGRD1 G-protein-coupled receptor activity in absence of cytosolic calcium. Binds glycerophospholipids in a barrel-like domain and may play a role in cellular lipid transport. The polypeptide is Extended synaptotagmin-1 (Homo sapiens (Human)).